The following is a 611-amino-acid chain: Chaperone protein HtpG (611 aa).

Residues 1-326 (MSETLERHAF…TEDLPLNVSR (326 aa)) form an a; substrate-binding region. The tract at residues 327-536 (EMLQATPVLA…SGGPDLQMQR (210 aa)) is b. The segment at 537–611 (LLRRAGRGFG…RVATALAAQG (75 aa)) is c.

The protein belongs to the heat shock protein 90 family. Homodimer.

The protein localises to the cytoplasm. Molecular chaperone. Has ATPase activity. This Methylobacterium nodulans (strain LMG 21967 / CNCM I-2342 / ORS 2060) protein is Chaperone protein HtpG.